A 297-amino-acid polypeptide reads, in one-letter code: Phosphatidylserine decarboxylase proenzyme (297 aa).

Residues Asp100, His157, and Ser263 each act as charge relay system; for autoendoproteolytic cleavage activity in the active site. Ser263 (schiff-base intermediate with substrate; via pyruvic acid; for decarboxylase activity) is an active-site residue. Ser263 carries the pyruvic acid (Ser); by autocatalysis modification.

This sequence belongs to the phosphatidylserine decarboxylase family. PSD-B subfamily. Prokaryotic type I sub-subfamily. As to quaternary structure, heterodimer of a large membrane-associated beta subunit and a small pyruvoyl-containing alpha subunit. The cofactor is pyruvate. In terms of processing, is synthesized initially as an inactive proenzyme. Formation of the active enzyme involves a self-maturation process in which the active site pyruvoyl group is generated from an internal serine residue via an autocatalytic post-translational modification. Two non-identical subunits are generated from the proenzyme in this reaction, and the pyruvate is formed at the N-terminus of the alpha chain, which is derived from the carboxyl end of the proenzyme. The autoendoproteolytic cleavage occurs by a canonical serine protease mechanism, in which the side chain hydroxyl group of the serine supplies its oxygen atom to form the C-terminus of the beta chain, while the remainder of the serine residue undergoes an oxidative deamination to produce ammonia and the pyruvoyl prosthetic group on the alpha chain. During this reaction, the Ser that is part of the protease active site of the proenzyme becomes the pyruvoyl prosthetic group, which constitutes an essential element of the active site of the mature decarboxylase.

It is found in the cell membrane. The enzyme catalyses a 1,2-diacyl-sn-glycero-3-phospho-L-serine + H(+) = a 1,2-diacyl-sn-glycero-3-phosphoethanolamine + CO2. Its pathway is phospholipid metabolism; phosphatidylethanolamine biosynthesis; phosphatidylethanolamine from CDP-diacylglycerol: step 2/2. Functionally, catalyzes the formation of phosphatidylethanolamine (PtdEtn) from phosphatidylserine (PtdSer). This Haemophilus ducreyi (strain 35000HP / ATCC 700724) protein is Phosphatidylserine decarboxylase proenzyme.